A 214-amino-acid chain; its full sequence is Lazarillo protein (214 aa).

The signal sequence occupies residues 1–21 (MIRRGLLSVTAALVLLSVSCS). Residues asparagine 38, asparagine 74, asparagine 84, asparagine 90, asparagine 130, asparagine 158, and asparagine 161 are each glycosylated (N-linked (GlcNAc...) asparagine). Alanine 192 is lipidated: GPI-anchor amidated alanine. The propeptide at 193 to 214 (GAEHVVGAMLSVAIASLFALLH) is removed in mature form.

It belongs to the calycin superfamily. Lipocalin family. In terms of processing, N-glycosylated. Contains disulfide bonds. Expressed by a subset of neuroblasts, ganglion mother cells and neurons of the CNS; by all sensory neurons of the PNS.

Its subcellular location is the cell membrane. Functionally, putative role in axonal outgrowth and guidance, required for the navigation of identified commissural neurons. Could be a receptor the midline morphogen. This Schistocerca americana (American grasshopper) protein is Lazarillo protein.